The chain runs to 478 residues: Protein nucleotidyltransferase YdiU (478 aa).

ATP-binding residues include Gly-84, Gly-86, Arg-87, Lys-107, Asp-119, Gly-120, Arg-170, and Arg-177. Catalysis depends on Asp-246, which acts as the Proton acceptor. Mg(2+)-binding residues include Asn-247 and Asp-256. An ATP-binding site is contributed by Asp-256.

Belongs to the SELO family. It depends on Mg(2+) as a cofactor. Mn(2+) is required as a cofactor.

It catalyses the reaction L-seryl-[protein] + ATP = 3-O-(5'-adenylyl)-L-seryl-[protein] + diphosphate. The catalysed reaction is L-threonyl-[protein] + ATP = 3-O-(5'-adenylyl)-L-threonyl-[protein] + diphosphate. It carries out the reaction L-tyrosyl-[protein] + ATP = O-(5'-adenylyl)-L-tyrosyl-[protein] + diphosphate. The enzyme catalyses L-histidyl-[protein] + UTP = N(tele)-(5'-uridylyl)-L-histidyl-[protein] + diphosphate. It catalyses the reaction L-seryl-[protein] + UTP = O-(5'-uridylyl)-L-seryl-[protein] + diphosphate. The catalysed reaction is L-tyrosyl-[protein] + UTP = O-(5'-uridylyl)-L-tyrosyl-[protein] + diphosphate. Nucleotidyltransferase involved in the post-translational modification of proteins. It can catalyze the addition of adenosine monophosphate (AMP) or uridine monophosphate (UMP) to a protein, resulting in modifications known as AMPylation and UMPylation. The sequence is that of Protein nucleotidyltransferase YdiU from Shigella boydii serotype 4 (strain Sb227).